The chain runs to 630 residues: Subtilisin-like protease 1 (630 aa).

The signal sequence occupies residues Met1 to Ala25. Positions Gly26–Asp202 are cleaved as a propeptide — inhibition peptide. Residues Asn72–Leu125 are disordered. Residues Pro76–Lys87 show a composition bias toward basic and acidic residues. Residues Thr94–Gln107 show a composition bias toward polar residues. Basic and acidic residues predominate over residues Lys108–Gly117. Ca(2+)-binding residues include Glu129, Asn130, Thr133, Pro135, and Gly190. Residues Leu230–Asp254 are disordered. Residues Pro233–Pro248 show a composition bias toward low complexity. Position 281 (Asp281) interacts with Ca(2+). The Peptidase S8 domain maps to Gln287–Val604. Cystine bridges form between Cys313-Cys423, Cys402-Cys419, and Cys465-Cys478. Asp316 serves as the catalytic Charge relay system. Positions 325, 336, 340, 343, 344, 345, 346, 348, 350, 352, and 353 each coordinate Ca(2+). The active-site Charge relay system is His372. Residues Val383, Asn386, Ile388, and Ile390 each coordinate Ca(2+). Asn546 carries an N-linked (GlcNAc...) asparagine glycan. Ser549 serves as the catalytic Charge relay system.

The protein belongs to the peptidase S8 family. Heterodimer between p54 form and prodomain p31; the interaction inhibits p54 catalytic activity. Heterodimer p31-p54 is monomeric at basic pH and dimeric at acidic pH; dimerization is driven by the N-terminal prodomain (p31). Requires Ca(2+) as cofactor. In terms of processing, the prodomain (p31) is cleaved, probably by autocatalysis, and remains non-covalently associated with the p54 form as an inhibitor. p54 is further cleaved into the p45/p47 forms. The relevance of the N-glycosylation is not clear. In an insect expression system, SUB1 glycosylation appears to affect its processing into the active mature form suggesting that SUB1 may not be N-glycosylated in parasites.

It localises to the secreted. The protein resides in the parasitophorous vacuole lumen. It catalyses the reaction Hydrolysis of proteins with broad specificity for peptide bonds, and a preference for a large uncharged residue in P1. Hydrolyzes peptide amides.. With respect to regulation, inhibited by peptidic alpha-ketoamide inhibitors. Inhibited by the alpha-ketoamide nonapeptide JMV5126 (isocaproyl-KITAQ(CO)DDEE-NH2). Inhibited by the alpha-ketoamide peptide MAM-117. Functionally, serine protease which plays an essential role in merozoite invasion of and egress from host erythrocytes by processing and activating various merozoite surface and parasitophorous vacuole proteins. This chain is Subtilisin-like protease 1, found in Plasmodium vivax.